The sequence spans 1378 residues: DNA-directed RNA polymerase subunit beta (1378 aa).

This sequence belongs to the RNA polymerase beta chain family. In terms of assembly, the RNAP catalytic core consists of 2 alpha, 1 beta, 1 beta' and 1 omega subunit. When a sigma factor is associated with the core the holoenzyme is formed, which can initiate transcription.

It carries out the reaction RNA(n) + a ribonucleoside 5'-triphosphate = RNA(n+1) + diphosphate. Its function is as follows. DNA-dependent RNA polymerase catalyzes the transcription of DNA into RNA using the four ribonucleoside triphosphates as substrates. The chain is DNA-directed RNA polymerase subunit beta from Dinoroseobacter shibae (strain DSM 16493 / NCIMB 14021 / DFL 12).